We begin with the raw amino-acid sequence, 58 residues long: Small ribosomal subunit protein bS21 (58 aa).

The tract at residues 24–58 (TKAGTLQEARKREHYEKPSVKRKRKSEAARKRKKI) is disordered. A compositionally biased stretch (basic and acidic residues) spans 31–42 (EARKREHYEKPS). The span at 43–58 (VKRKRKSEAARKRKKI) shows a compositional bias: basic residues.

Belongs to the bacterial ribosomal protein bS21 family.

This Streptococcus thermophilus (strain CNRZ 1066) protein is Small ribosomal subunit protein bS21.